We begin with the raw amino-acid sequence, 549 residues long: Chaperonin GroEL (549 aa).

Residues T30 to P33, K51, D87 to T91, G415, and D495 contribute to the ATP site.

The protein belongs to the chaperonin (HSP60) family. As to quaternary structure, forms a cylinder of 14 subunits composed of two heptameric rings stacked back-to-back. Interacts with the co-chaperonin GroES.

The protein localises to the cytoplasm. It carries out the reaction ATP + H2O + a folded polypeptide = ADP + phosphate + an unfolded polypeptide.. Its function is as follows. Together with its co-chaperonin GroES, plays an essential role in assisting protein folding. The GroEL-GroES system forms a nano-cage that allows encapsulation of the non-native substrate proteins and provides a physical environment optimized to promote and accelerate protein folding. The sequence is that of Chaperonin GroEL from Hahella chejuensis (strain KCTC 2396).